The primary structure comprises 86 residues: YcgL domain-containing protein XAC4085 (86 aa).

Residues Met1–Cys83 form the YcgL domain.

In Xanthomonas axonopodis pv. citri (strain 306), this protein is YcgL domain-containing protein XAC4085.